The chain runs to 158 residues: Probable inactive acireductone dioxygenase 2 (158 aa).

The protein belongs to the acireductone dioxygenase (ARD) family.

It is found in the cytoplasm. The protein localises to the nucleus. Its function is as follows. Probable inactive acireductone dioxygenase. The polypeptide is Probable inactive acireductone dioxygenase 2 (Caenorhabditis elegans).